A 208-amino-acid polypeptide reads, in one-letter code: N-(5'-phosphoribosyl)anthranilate isomerase (208 aa).

The protein belongs to the TrpF family.

It carries out the reaction N-(5-phospho-beta-D-ribosyl)anthranilate = 1-(2-carboxyphenylamino)-1-deoxy-D-ribulose 5-phosphate. The protein operates within amino-acid biosynthesis; L-tryptophan biosynthesis; L-tryptophan from chorismate: step 3/5. This is N-(5'-phosphoribosyl)anthranilate isomerase from Methanothrix thermoacetophila (strain DSM 6194 / JCM 14653 / NBRC 101360 / PT) (Methanosaeta thermophila).